The chain runs to 274 residues: 2,3,4,5-tetrahydropyridine-2,6-dicarboxylate N-succinyltransferase (274 aa).

It belongs to the transferase hexapeptide repeat family.

It localises to the cytoplasm. The catalysed reaction is (S)-2,3,4,5-tetrahydrodipicolinate + succinyl-CoA + H2O = (S)-2-succinylamino-6-oxoheptanedioate + CoA. Its pathway is amino-acid biosynthesis; L-lysine biosynthesis via DAP pathway; LL-2,6-diaminopimelate from (S)-tetrahydrodipicolinate (succinylase route): step 1/3. This Salmonella agona (strain SL483) protein is 2,3,4,5-tetrahydropyridine-2,6-dicarboxylate N-succinyltransferase.